The following is a 318-amino-acid chain: NADH-ubiquinone oxidoreductase chain 1 (318 aa).

A run of 8 helical transmembrane segments spans residues 2 to 22 (FTINILLLVIPILLAVAFLTL), 70 to 90 (MFIIAPILALTLALTMWIPLP), 100 to 120 (LGVLFMLAMSSLAVYSILWSG), 146 to 166 (LAIILLSVLLMNGSFTLSTLI), 171 to 191 (HLWLIFPSWPLAMMWFISTLA), 222 to 242 (LFFMAEYANIIMMNAFTTILF), 254 to 276 (LYTINFTTKTLLLTTSFLWIRAS), and 294 to 314 (LPLTLALCMWHVSLPITTSSI).

Belongs to the complex I subunit 1 family. As to quaternary structure, core subunit of respiratory chain NADH dehydrogenase (Complex I) which is composed of 45 different subunits.

The protein localises to the mitochondrion inner membrane. The catalysed reaction is a ubiquinone + NADH + 5 H(+)(in) = a ubiquinol + NAD(+) + 4 H(+)(out). Its function is as follows. Core subunit of the mitochondrial membrane respiratory chain NADH dehydrogenase (Complex I) which catalyzes electron transfer from NADH through the respiratory chain, using ubiquinone as an electron acceptor. Essential for the catalytic activity and assembly of complex I. The polypeptide is NADH-ubiquinone oxidoreductase chain 1 (MT-ND1) (Ceratotherium simum (White rhinoceros)).